Here is a 542-residue protein sequence, read N- to C-terminus: CTP synthase (542 aa).

The tract at residues 1 to 265 (MTRYVFITGG…DREILAHFQM (265 aa)) is amidoligase domain. S13 contacts CTP. S13 serves as a coordination point for UTP. Residues 14-19 (SLGKGL) and D71 contribute to the ATP site. 2 residues coordinate Mg(2+): D71 and E139. CTP contacts are provided by residues 146 to 148 (DIE), 186 to 191 (KTKPTQ), and K222. UTP is bound by residues 186-191 (KTKPTQ) and K222. Residue 238–240 (RDV) participates in ATP binding. The Glutamine amidotransferase type-1 domain maps to 291-541 (TIAIVGKYTG…IAAAIDQSRL (251 aa)). L-glutamine is bound at residue G353. C380 functions as the Nucleophile; for glutamine hydrolysis in the catalytic mechanism. L-glutamine is bound by residues 381-384 (FGMQ), E404, and R469. Catalysis depends on residues H514 and E516.

Belongs to the CTP synthase family. In terms of assembly, homotetramer.

It catalyses the reaction UTP + L-glutamine + ATP + H2O = CTP + L-glutamate + ADP + phosphate + 2 H(+). The catalysed reaction is L-glutamine + H2O = L-glutamate + NH4(+). The enzyme catalyses UTP + NH4(+) + ATP = CTP + ADP + phosphate + 2 H(+). It functions in the pathway pyrimidine metabolism; CTP biosynthesis via de novo pathway; CTP from UDP: step 2/2. With respect to regulation, allosterically activated by GTP, when glutamine is the substrate; GTP has no effect on the reaction when ammonia is the substrate. The allosteric effector GTP functions by stabilizing the protein conformation that binds the tetrahedral intermediate(s) formed during glutamine hydrolysis. Inhibited by the product CTP, via allosteric rather than competitive inhibition. Catalyzes the ATP-dependent amination of UTP to CTP with either L-glutamine or ammonia as the source of nitrogen. Regulates intracellular CTP levels through interactions with the four ribonucleotide triphosphates. The chain is CTP synthase from Methylorubrum extorquens (strain CM4 / NCIMB 13688) (Methylobacterium extorquens).